Consider the following 604-residue polypeptide: UvrABC system protein C (604 aa).

Positions 13–92 (ASPGVYLMKD…IKKYHPKYNV (80 aa)) constitute a GIY-YIG domain. The 36-residue stretch at 205 to 240 (SEIVQDLEKSIEKASKEQKFEQAGMYYRTLKLIQQA) folds into the UVR domain.

The protein belongs to the UvrC family. As to quaternary structure, interacts with UvrB in an incision complex.

The protein localises to the cytoplasm. Functionally, the UvrABC repair system catalyzes the recognition and processing of DNA lesions. UvrC both incises the 5' and 3' sides of the lesion. The N-terminal half is responsible for the 3' incision and the C-terminal half is responsible for the 5' incision. The sequence is that of UvrABC system protein C from Chlamydia abortus (strain DSM 27085 / S26/3) (Chlamydophila abortus).